We begin with the raw amino-acid sequence, 330 residues long: Tryptophan--tRNA ligase (330 aa).

ATP-binding positions include 10-12 (QTT) and 18-19 (GN). Positions 11–19 (TTGALHLGN) match the 'HIGH' region motif. Residue aspartate 134 coordinates L-tryptophan. ATP contacts are provided by residues 146–148 (GED), isoleucine 186, and 195–199 (KMSKS). Residues 195–199 (KMSKS) carry the 'KMSKS' region motif.

It belongs to the class-I aminoacyl-tRNA synthetase family. Homodimer.

The protein resides in the cytoplasm. It catalyses the reaction tRNA(Trp) + L-tryptophan + ATP = L-tryptophyl-tRNA(Trp) + AMP + diphosphate + H(+). Catalyzes the attachment of tryptophan to tRNA(Trp). This is Tryptophan--tRNA ligase from Rickettsia prowazekii (strain Madrid E).